The sequence spans 294 residues: Dof zinc finger protein DOF4.1 (294 aa).

Residues arginine 68–lysine 122 form a Dof-type zinc finger. Cysteine 70, cysteine 73, cysteine 95, and cysteine 98 together coordinate Zn(2+). 2 disordered regions span residues arginine 109 to alanine 178 and methionine 247 to tryptophan 294. Composition is skewed to polar residues over residues proline 126–asparagine 136 and lysine 157–methionine 173. A compositionally biased stretch (basic and acidic residues) spans glycine 251–glycine 273. Positions isoleucine 284–tryptophan 294 are enriched in gly residues.

It is found in the nucleus. Its function is as follows. Transcription factor that binds specifically to a 5'-AA[AG]G-3' consensus core sequence. The chain is Dof zinc finger protein DOF4.1 (DOF4.1) from Arabidopsis thaliana (Mouse-ear cress).